The primary structure comprises 279 residues: Acetyl-coenzyme A carboxylase carboxyl transferase subunit beta (279 aa).

Residues 23-279 (LWWKCEECGA…LTTLLSLMKL (257 aa)) form the CoA carboxyltransferase N-terminal domain. Residues cysteine 27, cysteine 30, cysteine 46, and cysteine 49 each coordinate Zn(2+). The segment at 27 to 49 (CEECGAALHKKQMEASDHTCPQC) adopts a C4-type zinc-finger fold.

This sequence belongs to the AccD/PCCB family. Acetyl-CoA carboxylase is a heterohexamer composed of biotin carboxyl carrier protein (AccB), biotin carboxylase (AccC) and two subunits each of ACCase subunit alpha (AccA) and ACCase subunit beta (AccD). The cofactor is Zn(2+).

It is found in the cytoplasm. It carries out the reaction N(6)-carboxybiotinyl-L-lysyl-[protein] + acetyl-CoA = N(6)-biotinyl-L-lysyl-[protein] + malonyl-CoA. Its pathway is lipid metabolism; malonyl-CoA biosynthesis; malonyl-CoA from acetyl-CoA: step 1/1. Component of the acetyl coenzyme A carboxylase (ACC) complex. Biotin carboxylase (BC) catalyzes the carboxylation of biotin on its carrier protein (BCCP) and then the CO(2) group is transferred by the transcarboxylase to acetyl-CoA to form malonyl-CoA. This is Acetyl-coenzyme A carboxylase carboxyl transferase subunit beta from Chlorobium chlorochromatii (strain CaD3).